The sequence spans 487 residues: UL37 immediate early glycoprotein (487 aa).

Positions 1 to 22 are cleaved as a signal peptide; the sequence is MSPVYVNLLGSVGLLAFWYFSY. The segment covering 83–107 has biased composition (acidic residues); that stretch reads GEESVTEDTEREDTEEEREDEEEEN. Residues 83–121 are disordered; it reads GEESVTEDTEREDTEEEREDEEEENEARTPEVNPIDAEG. 17 N-linked (GlcNAc...) asparagine; by host glycosylation sites follow: Asn206, Asn210, Asn219, Asn223, Asn242, Asn246, Asn275, Asn281, Asn294, Asn297, Asn306, Asn333, Asn337, Asn343, Asn379, Asn384, and Asn391. A helical membrane pass occupies residues 433–459; sequence WALLSICTVAAGSIALLSLFCILLIGL.

This sequence belongs to the immediate early glycoprotein family. As to quaternary structure, interacts with host BAX. Interacts with host RSAD2/viperin; this interaction results in RSAD2/viperin relocalization from the endoplasmic reticulum to the mitochondria, actin cytoskeleton disruption and enhancement of infection. Interacts with host PEX19; this interaction inhibits the peroxisomal-dependent antiviral signaling. Interacts with host CHCHD6; this interaction rewires mitochondria by engaging the conserved MICOS complex.

The protein resides in the host endoplasmic reticulum membrane. The protein localises to the host Golgi apparatus membrane. It localises to the host mitochondrion membrane. Its subcellular location is the host peroxisome. Functionally, multifunctional transmembrane protein that plays several key roles in viral replication. Rapidely traffics from the host endoplasmic reticulum to the outer mitochondrial membrane where it acts to inhibit host immune response, block apoptotic signaling, regulate calcium flux, and induce mitochondrial fragmentation. Sequesters proapoptotic BAX at the outer mitochondrial membrane and prevents cytochrome c release and subsequent initiation of the proapoptotic cascade. Also provoques a calcium efflux from host endoplasmic reticulum and F-actin cytoskeleton disruption. Participates in the increase of host mitochondrial biogenesis, thus promoting viral replication by efficient use of newly made mitochondria. Additionally, a subset of vMIA localizes to peroxisomes, causing fragmentation and blocking peroxisomal MAVS signaling. Mechanistically, inhibits host MAVS oligomerization at peroxisomes in a mitochondrial fission factors (MFF)-dependent manner and in mitochondria independently of mitochondrial fission factors. Plays an essential role in the trafficking of host viperin/RSAD2 from the endoplasmic reticulum to the viral assembly compartment via the mitochondria during viral infection as failure of viperin to localize to the mitochondria results in insufficient lipogenesis and thus reduces viral replication. May play a role in escape from the host antiviral response. The polypeptide is UL37 immediate early glycoprotein (UL37) (Human cytomegalovirus (strain AD169) (HHV-5)).